The primary structure comprises 425 residues: Protein disulfide isomerase-like 5-3 (425 aa).

The signal sequence occupies residues 1 to 28 (MGKPTLPPVVVVVVLLLLVVVLPATTCG). Positions 29–153 (ADAGGGGEAE…LVENLKKLVA (125 aa)) constitute a Thioredoxin domain. Catalysis depends on nucleophile residues Cys-75 and Cys-78. A disulfide bridge connects residues Cys-75 and Cys-78. A helical membrane pass occupies residues 386-406 (LLGVNAVYILVFLVAVLVLLM).

It belongs to the protein disulfide isomerase family.

The protein resides in the membrane. Acts as a protein-folding catalyst that interacts with nascent polypeptides to catalyze the formation, isomerization, and reduction or oxidation of disulfide bonds. May play a role in storage protein biogenesis. The chain is Protein disulfide isomerase-like 5-3 (PDIL5-3) from Oryza sativa subsp. japonica (Rice).